The following is a 156-amino-acid chain: Small ribosomal subunit protein uS7 (156 aa).

The protein belongs to the universal ribosomal protein uS7 family. In terms of assembly, part of the 30S ribosomal subunit. Contacts proteins S9 and S11.

Its function is as follows. One of the primary rRNA binding proteins, it binds directly to 16S rRNA where it nucleates assembly of the head domain of the 30S subunit. Is located at the subunit interface close to the decoding center, probably blocks exit of the E-site tRNA. The chain is Small ribosomal subunit protein uS7 from Methylococcus capsulatus (strain ATCC 33009 / NCIMB 11132 / Bath).